We begin with the raw amino-acid sequence, 156 residues long: Dihydrofolate reductase (156 aa).

Residues 1–156 enclose the DHFR domain; that stretch reads MLKLIWCQTL…VNYYSNKKEK (156 aa).

It belongs to the dihydrofolate reductase family.

The catalysed reaction is (6S)-5,6,7,8-tetrahydrofolate + NADP(+) = 7,8-dihydrofolate + NADPH + H(+). The protein operates within cofactor biosynthesis; tetrahydrofolate biosynthesis; 5,6,7,8-tetrahydrofolate from 7,8-dihydrofolate: step 1/1. Its function is as follows. Key enzyme in folate metabolism. Catalyzes an essential reaction for de novo glycine and purine synthesis, and for DNA precursor synthesis. This is Dihydrofolate reductase (folA) from Ureaplasma parvum serovar 3 (strain ATCC 700970).